Here is a 327-residue protein sequence, read N- to C-terminus: Gamma-resorcylate decarboxylase (327 aa).

4 residues coordinate Zn(2+): glutamate 8, histidine 10, histidine 164, and aspartate 287. Residue aspartate 287 is part of the active site.

It belongs to the metallo-dependent hydrolases superfamily. ACMSD family. In terms of assembly, homotetramer. Requires Zn(2+) as cofactor.

The enzyme catalyses 2,6-dihydroxybenzoate + H(+) = resorcinol + CO2. It carries out the reaction 2,3-dihydroxybenzoate + H(+) = catechol + CO2. Its pathway is aromatic compound metabolism. Its activity is regulated as follows. Insensitive to oxygen. Decarboxylation and carboxylation are inhibited by AgNO(3) and by diethyl pyrocarbonate, a histidine residue-specific inhibitor. Decarboxylation is also inhibited by HgCl(2) and activated by MgCl(2). Involved in the gamma-resorcylate (2,6-dihydroxybenzoate) catabolism. Catalyzes the reversible decarboxylation of gamma-resorcylate to resorcinol. Also catalyzes the decarboxylation of 2,3-dihydroxybenzoate to catechol, but does not act on 2-hydroxybenzoic acid 3-hydroxybenzoic acid, 4-hydroxybenzoic acid, 3,4-dihydroxybenzoic acid, 2,5-dihydroxybenzoic acid, 2,3,4-trihydroxybenzoic acid, 3,4,5-trihydroxybenzoic acid, 4-aminobenzoic acid, o-hydroxyphenylacetic acid and vanillic acid. Resorcinol and catechol can both be carboxylated by the reverse reaction. The chain is Gamma-resorcylate decarboxylase from Rhizobium radiobacter (Agrobacterium tumefaciens).